Consider the following 379-residue polypeptide: Cobalt-precorrin-5B C(1)-methyltransferase (379 aa).

This sequence belongs to the CbiD family.

The enzyme catalyses Co-precorrin-5B + S-adenosyl-L-methionine = Co-precorrin-6A + S-adenosyl-L-homocysteine. It participates in cofactor biosynthesis; adenosylcobalamin biosynthesis; cob(II)yrinate a,c-diamide from sirohydrochlorin (anaerobic route): step 6/10. In terms of biological role, catalyzes the methylation of C-1 in cobalt-precorrin-5B to form cobalt-precorrin-6A. The sequence is that of Cobalt-precorrin-5B C(1)-methyltransferase from Citrobacter koseri (strain ATCC BAA-895 / CDC 4225-83 / SGSC4696).